The primary structure comprises 447 residues: Argininosuccinate synthase (447 aa).

Residues 17 to 25 (AFSGGLDTS) and Ala-43 each bind ATP. Tyr-99 lines the L-citrulline pocket. Residues Gly-129 and Thr-131 each contribute to the ATP site. Positions 131, 135, and 136 each coordinate L-aspartate. Asn-135 is an L-citrulline binding site. Residue Asp-136 participates in ATP binding. Residues Arg-139 and Ser-192 each contribute to the L-citrulline site. Asp-194 is an ATP binding site. L-citrulline contacts are provided by Thr-201, Glu-203, and Glu-280.

This sequence belongs to the argininosuccinate synthase family. Type 2 subfamily. Homotetramer.

It is found in the cytoplasm. The catalysed reaction is L-citrulline + L-aspartate + ATP = 2-(N(omega)-L-arginino)succinate + AMP + diphosphate + H(+). The protein operates within amino-acid biosynthesis; L-arginine biosynthesis; L-arginine from L-ornithine and carbamoyl phosphate: step 2/3. The protein is Argininosuccinate synthase of Citrobacter koseri (strain ATCC BAA-895 / CDC 4225-83 / SGSC4696).